A 562-amino-acid chain; its full sequence is Glucan 1,3-beta-glucosidase 2 (562 aa).

The first 22 residues, 1 to 22 (MPLKSFFFSAFLVLCLSKFTQG), serve as a signal peptide directing secretion. Asparagine 50, asparagine 77, asparagine 86, asparagine 90, asparagine 106, asparagine 157, and asparagine 220 each carry an N-linked (GlcNAc...) asparagine glycan. Glutamate 254 (proton donor) is an active-site residue. N-linked (GlcNAc...) asparagine glycosylation is found at asparagine 281, asparagine 285, asparagine 310, asparagine 317, and asparagine 322. Histidine 334 acts as the Nucleophile in catalysis. N-linked (GlcNAc...) asparagine glycosylation is found at asparagine 401, asparagine 480, and asparagine 539.

It belongs to the glycosyl hydrolase 5 (cellulase A) family.

It is found in the cell membrane. It catalyses the reaction Successive hydrolysis of beta-D-glucose units from the non-reducing ends of (1-&gt;3)-beta-D-glucans, releasing alpha-glucose.. This is Glucan 1,3-beta-glucosidase 2 (EXG2) from Saccharomyces cerevisiae (strain ATCC 204508 / S288c) (Baker's yeast).